The sequence spans 112 residues: Integration host factor subunit alpha (112 aa).

The protein belongs to the bacterial histone-like protein family. In terms of assembly, heterodimer of an alpha and a beta chain.

Its function is as follows. This protein is one of the two subunits of integration host factor, a specific DNA-binding protein that functions in genetic recombination as well as in transcriptional and translational control. The polypeptide is Integration host factor subunit alpha (Rhizobium etli (strain CIAT 652)).